The chain runs to 637 residues: Biosynthetic arginine decarboxylase (637 aa).

K101 bears the N6-(pyridoxal phosphate)lysine mark. A substrate-binding site is contributed by 286-296; that stretch reads VDIGGGLGVDY.

Belongs to the Orn/Lys/Arg decarboxylase class-II family. SpeA subfamily. The cofactor is Mg(2+). Pyridoxal 5'-phosphate is required as a cofactor.

It catalyses the reaction L-arginine + H(+) = agmatine + CO2. It participates in amine and polyamine biosynthesis; agmatine biosynthesis; agmatine from L-arginine: step 1/1. Catalyzes the biosynthesis of agmatine from arginine. The chain is Biosynthetic arginine decarboxylase from Marinobacter nauticus (strain ATCC 700491 / DSM 11845 / VT8) (Marinobacter aquaeolei).